The following is a 782-amino-acid chain: Phosphoribosylformylglycinamidine synthase subunit PurL (782 aa).

The active site involves His50. Residues Tyr53 and Lys92 each contribute to the ATP site. Residue Glu94 coordinates Mg(2+). Substrate-binding positions include 95–98 (SHNH) and Arg117. Residue His96 is the Proton acceptor of the active site. Asp118 serves as a coordination point for Mg(2+). A substrate-binding site is contributed by Gln241. Asp269 provides a ligand contact to Mg(2+). 313–315 (ESQ) serves as a coordination point for substrate. Positions 520 and 557 each coordinate ATP. Asn558 contacts Mg(2+). Ser560 serves as a coordination point for substrate.

Belongs to the FGAMS family. As to quaternary structure, monomer. Part of the FGAM synthase complex composed of 1 PurL, 1 PurQ and 2 PurS subunits.

The protein resides in the cytoplasm. It carries out the reaction N(2)-formyl-N(1)-(5-phospho-beta-D-ribosyl)glycinamide + L-glutamine + ATP + H2O = 2-formamido-N(1)-(5-O-phospho-beta-D-ribosyl)acetamidine + L-glutamate + ADP + phosphate + H(+). The protein operates within purine metabolism; IMP biosynthesis via de novo pathway; 5-amino-1-(5-phospho-D-ribosyl)imidazole from N(2)-formyl-N(1)-(5-phospho-D-ribosyl)glycinamide: step 1/2. In terms of biological role, part of the phosphoribosylformylglycinamidine synthase complex involved in the purines biosynthetic pathway. Catalyzes the ATP-dependent conversion of formylglycinamide ribonucleotide (FGAR) and glutamine to yield formylglycinamidine ribonucleotide (FGAM) and glutamate. The FGAM synthase complex is composed of three subunits. PurQ produces an ammonia molecule by converting glutamine to glutamate. PurL transfers the ammonia molecule to FGAR to form FGAM in an ATP-dependent manner. PurS interacts with PurQ and PurL and is thought to assist in the transfer of the ammonia molecule from PurQ to PurL. In Cyanothece sp. (strain PCC 7425 / ATCC 29141), this protein is Phosphoribosylformylglycinamidine synthase subunit PurL.